The sequence spans 231 residues: DNA damage response protein C (231 aa).

In terms of assembly, homodimer.

It localises to the cytoplasm. Its subcellular location is the nucleoid. Functionally, appears to contribute to D.radiodurans capacity to survive exposure to ionizing radiation. Likely functions as a DNA damage-induced nucleoid-associated protein (NAP) that contributes to the enhanced level of nucleoid compaction after irradiation by bridging DNA duplexes, thereby limiting the dispersion of the fragmented genome immediately after irradiation to facilitate subsequent DNA repair. In vitro, binds both ssDNA and dsDNA, and is able to compact circular DNA, circularize linear DNA, anneal complementary DNA strands and protect DNA from nucleases. This Deinococcus radiodurans (strain ATCC 13939 / DSM 20539 / JCM 16871 / CCUG 27074 / LMG 4051 / NBRC 15346 / NCIMB 9279 / VKM B-1422 / R1) protein is DNA damage response protein C.